Here is a 1161-residue protein sequence, read N- to C-terminus: ATP-dependent helicase/deoxyribonuclease subunit B (1161 aa).

This sequence belongs to the helicase family. AddB/RexB type 2 subfamily. Heterodimer of AddA and RexB. The cofactor is Mg(2+).

In terms of biological role, the heterodimer acts as both an ATP-dependent DNA helicase and an ATP-dependent, dual-direction single-stranded exonuclease. Recognizes the chi site generating a DNA molecule suitable for the initiation of homologous recombination. This subunit has 5' -&gt; 3' nuclease activity but not helicase activity. In Oenococcus oeni (strain ATCC BAA-331 / PSU-1), this protein is ATP-dependent helicase/deoxyribonuclease subunit B.